We begin with the raw amino-acid sequence, 163 residues long: Lectin-like protein EP153R (163 aa).

Topologically, residues 1 to 26 (MFSNKKYIGLINKKEGLKKKIDDYSI) are cytoplasmic. Residues 27-47 (LIIGILIGTNILSLIINIIGE) traverse the membrane as a helical segment. Topologically, residues 48–163 (INKPICYQNN…YTDLLFICSK (116 aa)) are extracellular. Cysteine 63 and cysteine 74 are oxidised to a cystine. Residues 63–162 (CPKDWVGYNN…HYTDLLFICS (100 aa)) are lectin-like. Asparagine 84, asparagine 96, asparagine 97, asparagine 103, asparagine 109, asparagine 115, asparagine 129, and asparagine 135 each carry an N-linked (GlcNAc...) asparagine; by host glycan. Cysteine 92 and cysteine 161 form a disulfide bridge.

This sequence belongs to the asfivirus lectin-like protein family. Homodimer.

The protein localises to the host endoplasmic reticulum membrane. Its function is as follows. Down-regulates MHC-I expression by impairing the appropriate configuration or presentation into the plasma membrane of the latter. Participates in viral hemadsorption, which may help viral spread. Reduces the transactivating activity of host TP53, thus inhibiting apoptosis. Non-essential for virus growth in swine macrophage cell cultures. This chain is Lectin-like protein EP153R, found in African swine fever virus (isolate Warthog/Namibia/Wart80/1980) (ASFV).